The sequence spans 231 residues: Probable septum site-determining protein MinC (231 aa).

The disordered stretch occupies residues 102-125 (KEKAPRPAPAPQAPAQNTTPVTKT).

It belongs to the MinC family. In terms of assembly, interacts with MinD and FtsZ.

Functionally, cell division inhibitor that blocks the formation of polar Z ring septums. Rapidly oscillates between the poles of the cell to destabilize FtsZ filaments that have formed before they mature into polar Z rings. Prevents FtsZ polymerization. The polypeptide is Probable septum site-determining protein MinC (Escherichia coli O139:H28 (strain E24377A / ETEC)).